We begin with the raw amino-acid sequence, 152 residues long: Transcriptional regulator MraZ (152 aa).

2 SpoVT-AbrB domains span residues 5–52 and 81–124; these read ATLV…PLPE and ASEC…DETT.

The protein belongs to the MraZ family. Dodecamer.

The protein resides in the cytoplasm. The protein localises to the nucleoid. Its function is as follows. Negatively regulates its own expression and that of the subsequent genes in the proximal part of the division and cell wall (dcw) gene cluster. Acts by binding directly to DNA. May also regulate the expression of genes outside the dcw cluster. This Escherichia coli (strain K12) protein is Transcriptional regulator MraZ.